Here is a 381-residue protein sequence, read N- to C-terminus: DNA repair protein RAD51 homolog 3 (381 aa).

Positions 1 to 24 (MDEDINKDTNNNNNTTDSNNNNNN) are disordered. Residues 8–24 (DTNNNNNTTDSNNNNNN) are compositionally biased toward low complexity. 89 to 96 (GVPGIGKT) provides a ligand contact to ATP. The tract at residues 313–381 (GFNHPPPLNP…NDENEMYIEN (69 aa)) is disordered. The stretch at 323-377 (EDQEQEKEKEKRKKKNNNNNNNNNNNNNNNNNNNNNNNNNNNNNNNNKNNDENEM) forms a coiled coil. Positions 339-370 (NNNNNNNNNNNNNNNNNNNNNNNNNNNNNNNK) are enriched in low complexity.

The protein belongs to the RecA family. RAD51 subfamily.

The protein resides in the nucleus. Involved in the homologous recombination repair (HRR) pathway of double-stranded DNA breaks arising during DNA replication or induced by DNA-damaging agents. This Dictyostelium discoideum (Social amoeba) protein is DNA repair protein RAD51 homolog 3 (rad51c).